We begin with the raw amino-acid sequence, 392 residues long: Protein DJ-1 homolog A (392 aa).

PfpI endopeptidase domains follow at residues 6–174 (KTVL…EQLF) and 212–378 (PQIL…EKFY).

It belongs to the peptidase C56 family. In terms of assembly, homodimer. Interacts with CSD1 and GPX2.

The protein resides in the cytoplasm. It is found in the cytosol. It localises to the nucleus. Its function is as follows. Involved in oxidative stress response. Confers protection against diverse stresses by binding both CSD1 and GPX2 and mediating the cytosolic activation of the Cu-Zn-dependent superoxide dismutase activity of CSD1. This Arabidopsis thaliana (Mouse-ear cress) protein is Protein DJ-1 homolog A (DJ1A).